The sequence spans 884 residues: Alanine--tRNA ligase (884 aa).

H562, H566, C674, and H678 together coordinate Zn(2+).

It belongs to the class-II aminoacyl-tRNA synthetase family. Zn(2+) is required as a cofactor.

Its subcellular location is the cytoplasm. The catalysed reaction is tRNA(Ala) + L-alanine + ATP = L-alanyl-tRNA(Ala) + AMP + diphosphate. Its function is as follows. Catalyzes the attachment of alanine to tRNA(Ala) in a two-step reaction: alanine is first activated by ATP to form Ala-AMP and then transferred to the acceptor end of tRNA(Ala). Also edits incorrectly charged Ser-tRNA(Ala) and Gly-tRNA(Ala) via its editing domain. In Rhizobium etli (strain ATCC 51251 / DSM 11541 / JCM 21823 / NBRC 15573 / CFN 42), this protein is Alanine--tRNA ligase.